The following is a 669-amino-acid chain: Zinc finger CCCH domain-containing protein 17 (669 aa).

Low complexity predominate over residues 1-11; the sequence is MFAPATQPQQQ. The interval 1 to 23 is disordered; the sequence is MFAPATQPQQQHEQKKQSETVSS. 3 consecutive C3H1-type zinc fingers follow at residues 34–58, 60–86, and 114–141; these read DCVYFLASPLTCKKGPECEYRHSEY, RMNPRDCYYWLNGNCLNPKCGFRHPPL, and AKQPVPCLFFQKGMCMKGDMCSFLHTPN. 4 disordered regions span residues 150-175, 285-306, 376-589, and 642-669; these read PVEAKPATDPQCSKKPIENNTEEKKL, VEDRYGRRSQERGNSEYDPDFS, GMRL…VMEE, and EEGEEEATEGGEGEGEEDIEKKTVEMLS. Composition is skewed to basic and acidic residues over residues 164–175, 285–299, 392–406, 420–464, 478–499, and 547–579; these read KPIENNTEEKKL, VEDRYGRRSQERGNS, SMDRGYRESRRDTPR, KLRE…EENH, RRREMEDERKSAPKSSREESKP, and NNKDETISKEEAGDEIKLITEEKTEVVSEPKAE. Acidic residues-rich tracts occupy residues 580-589 and 642-659; these read VEEEGTVMEE and EEGEEEATEGGEGEGEED. Residues 660 to 669 are compositionally biased toward basic and acidic residues; the sequence is IEKKTVEMLS.

The polypeptide is Zinc finger CCCH domain-containing protein 17 (Arabidopsis thaliana (Mouse-ear cress)).